A 559-amino-acid polypeptide reads, in one-letter code: NAD(P)H-quinone oxidoreductase chain 4-2 (559 aa).

A run of 14 helical transmembrane segments spans residues 5–25, 35–55, 86–106, 114–134, 136–156, 168–188, 207–227, 242–262, 274–294, 310–330, 331–351, 374–394, 417–437, and 488–508; these read FPWL…IPLI, WYAL…FWTN, ISMP…FAAW, LFYF…VAQD, LLLF…VCIW, FLLY…GLAF, IALE…KLAI, SAPV…YGLI, VYFA…GGFS, VSHM…GISG, AMLQ…LAGV, VFAL…MSGF, VTVF…LSML, and VFIA…PKLA.

Belongs to the complex I subunit 4 family.

Its subcellular location is the cellular thylakoid membrane. The enzyme catalyses a plastoquinone + NADH + (n+1) H(+)(in) = a plastoquinol + NAD(+) + n H(+)(out). It catalyses the reaction a plastoquinone + NADPH + (n+1) H(+)(in) = a plastoquinol + NADP(+) + n H(+)(out). Functionally, NDH-1 shuttles electrons from NAD(P)H, via FMN and iron-sulfur (Fe-S) centers, to quinones in the respiratory chain. The immediate electron acceptor for the enzyme in this species is believed to be plastoquinone. Couples the redox reaction to proton translocation (for every two electrons transferred, four hydrogen ions are translocated across the cytoplasmic membrane), and thus conserves the redox energy in a proton gradient. The sequence is that of NAD(P)H-quinone oxidoreductase chain 4-2 (ndhD2) from Synechocystis sp. (strain ATCC 27184 / PCC 6803 / Kazusa).